Reading from the N-terminus, the 214-residue chain is EEF1A lysine methyltransferase 1 (214 aa).

Ser-2 carries the post-translational modification N-acetylserine. Residue Ser-2 is modified to Phosphoserine.

The protein belongs to the class I-like SAM-binding methyltransferase superfamily. EFM5 family.

The protein localises to the cytoplasm. It carries out the reaction L-lysyl-[protein] + 3 S-adenosyl-L-methionine = N(6),N(6),N(6)-trimethyl-L-lysyl-[protein] + 3 S-adenosyl-L-homocysteine + 3 H(+). Protein N-lysine methyltransferase that selectively catalyzes the trimethylation of EEF1A at 'Lys-79'. The polypeptide is EEF1A lysine methyltransferase 1 (Homo sapiens (Human)).